Consider the following 237-residue polypeptide: UDP-2,3-diacylglucosamine hydrolase (237 aa).

Residues Asp-9, His-11, Asp-42, Asn-80, and His-115 each contribute to the Mn(2+) site. Position 80 to 81 (80 to 81 (NR)) interacts with substrate. The substrate site is built by Asp-123, Ser-161, Lys-165, Lys-168, and His-196. Residues His-196 and His-198 each coordinate Mn(2+).

The protein belongs to the LpxH family. Mn(2+) serves as cofactor.

Its subcellular location is the cell inner membrane. The protein resides in the cytoplasm. It carries out the reaction UDP-2-N,3-O-bis[(3R)-3-hydroxytetradecanoyl]-alpha-D-glucosamine + H2O = 2-N,3-O-bis[(3R)-3-hydroxytetradecanoyl]-alpha-D-glucosaminyl 1-phosphate + UMP + 2 H(+). Its pathway is glycolipid biosynthesis; lipid IV(A) biosynthesis; lipid IV(A) from (3R)-3-hydroxytetradecanoyl-[acyl-carrier-protein] and UDP-N-acetyl-alpha-D-glucosamine: step 4/6. In terms of biological role, hydrolyzes the pyrophosphate bond of UDP-2,3-diacylglucosamine to yield 2,3-diacylglucosamine 1-phosphate (lipid X) and UMP by catalyzing the attack of water at the alpha-P atom. Involved in the biosynthesis of lipid A, a phosphorylated glycolipid that anchors the lipopolysaccharide to the outer membrane of the cell. This is UDP-2,3-diacylglucosamine hydrolase from Haemophilus influenzae (strain ATCC 51907 / DSM 11121 / KW20 / Rd).